Reading from the N-terminus, the 391-residue chain is Lipid-A-disaccharide synthase (391 aa).

This sequence belongs to the LpxB family.

The enzyme catalyses a lipid X + a UDP-2-N,3-O-bis[(3R)-3-hydroxyacyl]-alpha-D-glucosamine = a lipid A disaccharide + UDP + H(+). It participates in bacterial outer membrane biogenesis; LPS lipid A biosynthesis. Its function is as follows. Condensation of UDP-2,3-diacylglucosamine and 2,3-diacylglucosamine-1-phosphate to form lipid A disaccharide, a precursor of lipid A, a phosphorylated glycolipid that anchors the lipopolysaccharide to the outer membrane of the cell. This is Lipid-A-disaccharide synthase from Rickettsia akari (strain Hartford).